Reading from the N-terminus, the 346-residue chain is Methylthioribose-1-phosphate isomerase (346 aa).

Substrate is bound by residues 48 to 50 (RGA), Arg91, and Gln200. Asp241 acts as the Proton donor in catalysis. 251–252 (NK) contributes to the substrate binding site.

This sequence belongs to the eIF-2B alpha/beta/delta subunits family. MtnA subfamily.

The enzyme catalyses 5-(methylsulfanyl)-alpha-D-ribose 1-phosphate = 5-(methylsulfanyl)-D-ribulose 1-phosphate. Its pathway is amino-acid biosynthesis; L-methionine biosynthesis via salvage pathway; L-methionine from S-methyl-5-thio-alpha-D-ribose 1-phosphate: step 1/6. Its function is as follows. Catalyzes the interconversion of methylthioribose-1-phosphate (MTR-1-P) into methylthioribulose-1-phosphate (MTRu-1-P). The chain is Methylthioribose-1-phosphate isomerase from Picosynechococcus sp. (strain ATCC 27264 / PCC 7002 / PR-6) (Agmenellum quadruplicatum).